The sequence spans 617 residues: Dihydroxy-acid dehydratase (617 aa).

Asp81 serves as a coordination point for Mg(2+). Position 122 (Cys122) interacts with [2Fe-2S] cluster. Residues Asp123 and Lys124 each coordinate Mg(2+). At Lys124 the chain carries N6-carboxylysine. Cys195 contributes to the [2Fe-2S] cluster binding site. Glu491 lines the Mg(2+) pocket. The active-site Proton acceptor is the Ser517.

The protein belongs to the IlvD/Edd family. In terms of assembly, homodimer. It depends on [2Fe-2S] cluster as a cofactor. The cofactor is Mg(2+).

It carries out the reaction (2R)-2,3-dihydroxy-3-methylbutanoate = 3-methyl-2-oxobutanoate + H2O. It catalyses the reaction (2R,3R)-2,3-dihydroxy-3-methylpentanoate = (S)-3-methyl-2-oxopentanoate + H2O. The protein operates within amino-acid biosynthesis; L-isoleucine biosynthesis; L-isoleucine from 2-oxobutanoate: step 3/4. It functions in the pathway amino-acid biosynthesis; L-valine biosynthesis; L-valine from pyruvate: step 3/4. In terms of biological role, functions in the biosynthesis of branched-chain amino acids. Catalyzes the dehydration of (2R,3R)-2,3-dihydroxy-3-methylpentanoate (2,3-dihydroxy-3-methylvalerate) into 2-oxo-3-methylpentanoate (2-oxo-3-methylvalerate) and of (2R)-2,3-dihydroxy-3-methylbutanoate (2,3-dihydroxyisovalerate) into 2-oxo-3-methylbutanoate (2-oxoisovalerate), the penultimate precursor to L-isoleucine and L-valine, respectively. In Buchnera aphidicola subsp. Acyrthosiphon pisum (strain 5A), this protein is Dihydroxy-acid dehydratase.